Consider the following 135-residue polypeptide: Small ribosomal subunit protein uS11 (135 aa).

The segment at 1-22 (MPPKSRTAAGAKKVRRKEKKNV) is disordered.

It belongs to the universal ribosomal protein uS11 family. In terms of assembly, part of the 30S ribosomal subunit. Interacts with proteins S7 and S18. Binds to IF-3.

Located on the platform of the 30S subunit, it bridges several disparate RNA helices of the 16S rRNA. Forms part of the Shine-Dalgarno cleft in the 70S ribosome. This Nocardioides sp. (strain ATCC BAA-499 / JS614) protein is Small ribosomal subunit protein uS11.